The chain runs to 313 residues: PGR5-like protein 1B, chloroplastic (313 aa).

Residues 1–49 (MAFTLTIPRFSAISRKPITCSSSRTQCPAPFTHGRSISLRRRLTLLPLK) constitute a chloroplast transit peptide. The residue at position 50 (Ala-50) is an N-acetylalanine. The Stromal portion of the chain corresponds to 50–187 (ASTDQSGQVG…KVYSDLAIDY (138 aa)). Cysteines 71 and 172 form a disulfide. A helical transmembrane segment spans residues 188–208 (FKMFLLNVPATVVALGLFFFL). The Lumenal, thylakoid portion of the chain corresponds to 209–225 (DDITGFEITYLLELPEP). Residues 226-246 (FSFIFTWFAAVPAIVYLALSL) traverse the membrane as a helical segment. Residues 247–313 (TKLILKDFLI…LITLPEGGKA (67 aa)) lie on the Stromal side of the membrane.

It belongs to the PGR5 family. As to quaternary structure, homodimer and heterodimer with PGR5. Interacts with PGR5, FD2, psaD1, LFNR1 and LFNR2. Also interacts with petC and a Fe-containing cofactor (FCC). Post-translationally, disulfide bonds; Cys-289 and Cys-292 are probably involved in the formation of disulfide bridges with 'Cys-11' and 'Cys-105' of PGR5 while Cys-261 and Cys-264 are probably involved in the binding of a Fe-containing cofactor (FCC).

It is found in the plastid. The protein resides in the chloroplast thylakoid membrane. Its activity is regulated as follows. Inhibited by antimycin A. In terms of biological role, ferredoxin-plastoquinone reductase involved in cyclic electron flow (CEF) around photosystem I. The homodimer is probably not involved in CEF. The chain is PGR5-like protein 1B, chloroplastic (PGRL1B) from Arabidopsis thaliana (Mouse-ear cress).